Consider the following 178-residue polypeptide: ATP-dependent protease subunit HslV (178 aa).

Residue Thr-7 is part of the active site. The Na(+) site is built by Gly-162, Cys-165, and Thr-168.

Belongs to the peptidase T1B family. HslV subfamily. As to quaternary structure, a double ring-shaped homohexamer of HslV is capped on each side by a ring-shaped HslU homohexamer. The assembly of the HslU/HslV complex is dependent on binding of ATP.

It is found in the cytoplasm. The enzyme catalyses ATP-dependent cleavage of peptide bonds with broad specificity.. With respect to regulation, allosterically activated by HslU binding. In terms of biological role, protease subunit of a proteasome-like degradation complex believed to be a general protein degrading machinery. The protein is ATP-dependent protease subunit HslV of Dechloromonas aromatica (strain RCB).